A 287-amino-acid chain; its full sequence is Pyridoxal kinase PdxY (287 aa).

Residues Ser10 and Thr45–Gln46 each bind substrate. ATP-binding positions include Asp112, Ala144, Glu149, Lys182, and Arg209–Val212. Asp224 contributes to the substrate binding site.

The protein belongs to the pyridoxine kinase family. PdxY subfamily. Homodimer. Mg(2+) is required as a cofactor.

The catalysed reaction is pyridoxal + ATP = pyridoxal 5'-phosphate + ADP + H(+). The protein operates within cofactor metabolism; pyridoxal 5'-phosphate salvage; pyridoxal 5'-phosphate from pyridoxal: step 1/1. Pyridoxal kinase involved in the salvage pathway of pyridoxal 5'-phosphate (PLP). Catalyzes the phosphorylation of pyridoxal to PLP. The chain is Pyridoxal kinase PdxY from Escherichia coli O157:H7.